The sequence spans 921 residues: Retinoblastoma-associated protein (921 aa).

The segment at 1–36 (MPPKAPRRAAAAEPPPPPPPPPREDDPAQDSGPEEL) is disordered. Pro-2 carries the post-translational modification N,N-dimethylproline; by NTM1. Phosphoserine is present on residues Ser-31 and Ser-243. 4 positions are modified to phosphothreonine: Thr-246, Thr-350, Thr-364, and Thr-367. A disordered region spans residues 341 to 360 (PIDSFETERTPRKNNPDEEA). Over residues 346-356 (ETERTPRKNNP) the composition is skewed to basic and acidic residues. Residues 367 to 573 (TPVRTVMNTI…FDLIKQSKDG (207 aa)) are domain A. The segment at 367–764 (TPVRTVMNTI…QRLKTNILQY (398 aa)) is pocket; binds T and E1A. Ser-561 is subject to Phosphoserine; by CDK2. Residues 574–632 (EGPDNLEPACPLSLPLQGNHTAADMYLSPLRSPKKRTSTTRVNSAANTETQAASAFHTQ) are spacer. A phosphoserine mark is found at Ser-601, Ser-605, and Ser-617. The domain B stretch occupies residues 633 to 764 (KPLKSTSLAL…QRLKTNILQY (132 aa)). The interaction with LIMD1 stretch occupies residues 756–921 (RLKTNILQYA…SKDVSNKEEK (166 aa)). The tract at residues 764–921 (YASTRPPTLS…SKDVSNKEEK (158 aa)) is domain; mediates interaction with E4F1. Phosphoserine occurs at positions 773, 781, 788, and 800. An N6-methyllysine; by SMYD2 modification is found at Lys-803. Phosphoserine is present on Ser-804. Thr-814, Thr-816, Thr-819, and Thr-834 each carry phosphothreonine. Ser-848 bears the Phosphoserine mark. Lys-853 carries the post-translational modification N6-methyllysine; by SMYD2. The Bipartite nuclear localization signal signature appears at 853 to 869 (KRSAEGGNPPKPLKKLR). An N6-acetyllysine; by PCAF mark is found at Lys-866 and Lys-867. Positions 872–921 (IEGADEADGSKHLPAESKFQQKLAEMTSTRTRMQKQRMNESKDVSNKEEK) are disordered. Residues 908–921 (RMNESKDVSNKEEK) show a composition bias toward basic and acidic residues.

This sequence belongs to the retinoblastoma protein (RB) family. In terms of assembly, the hypophosphorylated form interacts with and sequesters the E2F1 transcription factor, thereby inhibiting E2F1 transcription. Interacts with heterodimeric E2F/DP transcription factor complexes containing TFDP1 and either E2F1/E2F, E2F3, E2F4 or E2F5, or TFDP2 and E2F4. Interacts (when hyperphosphorylated and hypophosphorylated) with PKP3; the interaction inhibits RB1 interaction with and repression of the transcription factor E2F1, potentially via sequestering RB1 to the cytoplasm. The unphosphorylated form interacts with EID1, ARID3B, KDM5A, SUV39H1, MJD2A/JHDM3A and THOC1. Interacts with the N-terminal domain of TAF1. Interacts with SNW1, ATAD5, AATF, DNMT1, LIN9, LMNA, KMT5B, KMT5C, PELP1, UHRF2, TMPO-alpha and USP4. Interacts with GRIP1 and UBR4. Interacts with ARID4A and KDM5B. Interacts with E4F1 and LIMD1. Interacts with SMARCA4/BRG1 and HDAC1. Interacts with USP4. Interacts (when methylated at Lys-853) with L3MBTL1. Binds to CDK1 and CDK2. Interacts with CHEK2; phosphorylates RB1. Interacts with PRMT2. Interacts with CEBPA. P-TEFB complex interacts with RB1; promotes phosphorylation of RB1. Interacts with RBBP9; the interaction disrupts RB1 binding to E2F1. Interacts with KAT2B/PCAF and EP300/P300. Interacts with PAX5. Interacts (phosphorylated and unphosphorylated) with BLCAP. May interact with NDC80. As to quaternary structure, (Microbial infection) Interacts with adenovirus E1a protein. (Microbial infection) Interacts with SV40 large T antigen. In terms of processing, phosphorylated. Phosphorylated by CDK6 and CDK4, and subsequently by CDK2 at Ser-561 in G1, thereby releasing E2F1 which is then able to activate cell growth. Dephosphorylated at the late M phase. Phosphorylation of threonine residues in domain C promotes interaction between the C-terminal domain C and the Pocket domain, and thereby inhibits interactions with heterodimeric E2F/DP transcription factor complexes. Dephosphorylated at Ser-788 by calcineruin upon calcium stimulation. CDK3/cyclin-C-mediated phosphorylation at Ser-800 and Ser-804 is required for G0-G1 transition. Phosphorylated by CDK1 and CDK2 upon TGFB1-mediated apoptosis. Monomethylation at Lys-803 by SMYD2 enhances phosphorylation at Ser-800 and Ser-804, and promotes cell cycle progression. Monomethylation at Lys-853 by SMYD2 promotes interaction with L3MBTL1. N-terminus is methylated by METTL11A/NTM1. Post-translationally, acetylated in the skin. Acetylation at Lys-866 and Lys-867 regulates subcellular localization during keratinocytes differentiation. Expressed in the cell nuclei of renal tubules, hepatocytes and skeletal muscles. Expressed in skin (at protein level).

It localises to the nucleus. Its subcellular location is the cytoplasm. Tumor suppressor that is a key regulator of the G1/S transition of the cell cycle. The hypophosphorylated form binds transcription regulators of the E2F family, preventing transcription of E2F-responsive genes. Both physically blocks E2Fs transactivating domain and recruits chromatin-modifying enzymes that actively repress transcription. Cyclin and CDK-dependent phosphorylation of RB1 induces its dissociation from E2Fs, thereby activating transcription of E2F responsive genes and triggering entry into S phase. RB1 also promotes the G0-G1 transition upon phosphorylation and activation by CDK3/cyclin-C. Directly involved in heterochromatin formation by maintaining overall chromatin structure and, in particular, that of constitutive heterochromatin by stabilizing histone methylation. Recruits and targets histone methyltransferases SUV39H1, KMT5B and KMT5C, leading to epigenetic transcriptional repression. Controls histone H4 'Lys-20' trimethylation. Inhibits the intrinsic kinase activity of TAF1. Mediates transcriptional repression by SMARCA4/BRG1 by recruiting a histone deacetylase (HDAC) complex to the c-FOS promoter. In resting neurons, transcription of the c-FOS promoter is inhibited by BRG1-dependent recruitment of a phospho-RB1-HDAC1 repressor complex. Upon calcium influx, RB1 is dephosphorylated by calcineurin, which leads to release of the repressor complex. In Mus musculus (Mouse), this protein is Retinoblastoma-associated protein (Rb1).